The primary structure comprises 538 residues: Cytochrome P450 monooxygenase verH (538 aa).

A helical membrane pass occupies residues 2–21 (VFAMLVVCWSIFLGLWMLVS). Cys-445 contacts heme.

It belongs to the cytochrome P450 family. Heme is required as a cofactor.

The protein localises to the membrane. Its pathway is secondary metabolite biosynthesis; terpenoid biosynthesis. It participates in mycotoxin biosynthesis. Cytochrome P450 monooxygenase; part of the gene cluster that mediates the biosynthesis of the neurotoxin verrucosidin, a methylated alpha-pyrone polyketide that inhibits oxidative phosphorylation in mitochondria and thereby causes neurological diseases. The carbon backbone of verrucosidin is synthesized by the HR-PKS verA, and further modified by the other verrucodidin cluster enzymes. This chain is Cytochrome P450 monooxygenase verH, found in Penicillium polonicum.